The chain runs to 223 residues: Deoxyribose-phosphate aldolase (223 aa).

The Proton donor/acceptor role is filled by aspartate 89. Lysine 152 functions as the Schiff-base intermediate with acetaldehyde in the catalytic mechanism. Residue lysine 181 is the Proton donor/acceptor of the active site.

Belongs to the DeoC/FbaB aldolase family. DeoC type 1 subfamily.

It is found in the cytoplasm. It catalyses the reaction 2-deoxy-D-ribose 5-phosphate = D-glyceraldehyde 3-phosphate + acetaldehyde. It functions in the pathway carbohydrate degradation; 2-deoxy-D-ribose 1-phosphate degradation; D-glyceraldehyde 3-phosphate and acetaldehyde from 2-deoxy-alpha-D-ribose 1-phosphate: step 2/2. Functionally, catalyzes a reversible aldol reaction between acetaldehyde and D-glyceraldehyde 3-phosphate to generate 2-deoxy-D-ribose 5-phosphate. The polypeptide is Deoxyribose-phosphate aldolase (Bacillus cereus (strain ATCC 10987 / NRS 248)).